A 26-amino-acid chain; its full sequence is Omega-conotoxin CVIC (26 aa).

3 disulfide bridges follow: cysteine 1–cysteine 16, cysteine 8–cysteine 20, and cysteine 15–cysteine 26. Cysteine 26 bears the Cysteine amide mark.

Belongs to the conotoxin O1 superfamily. Expressed by the venom duct.

The protein resides in the secreted. In terms of biological role, omega-conotoxins act at presynaptic membranes, they bind and block voltage-gated calcium channels (Cav). This toxin blocks N-, P- and Q-type calcium channels. The sequence is that of Omega-conotoxin CVIC from Conus catus (Cat cone).